A 343-amino-acid chain; its full sequence is Heat-inducible transcription repressor HrcA (343 aa).

The protein belongs to the HrcA family.

Functionally, negative regulator of class I heat shock genes (grpE-dnaK-dnaJ and groELS operons). Prevents heat-shock induction of these operons. The polypeptide is Heat-inducible transcription repressor HrcA (Clostridium acetobutylicum (strain ATCC 824 / DSM 792 / JCM 1419 / IAM 19013 / LMG 5710 / NBRC 13948 / NRRL B-527 / VKM B-1787 / 2291 / W)).